A 764-amino-acid chain; its full sequence is Calpain-like protease palB/RIM13 (764 aa).

The Calpain catalytic domain maps to 95-368 (GEFYPPLTVY…FKYFYINWNP (274 aa)). Active-site residues include cysteine 165, histidine 318, and asparagine 336.

Belongs to the peptidase C2 family. PalB/RIM13 subfamily.

Required for the proteolytic cleavage of the transcription factor RIM101 in response to alkaline ambient pH. This Debaryomyces hansenii (strain ATCC 36239 / CBS 767 / BCRC 21394 / JCM 1990 / NBRC 0083 / IGC 2968) (Yeast) protein is Calpain-like protease palB/RIM13.